We begin with the raw amino-acid sequence, 580 residues long: Arginine--tRNA ligase (580 aa).

Positions 127–137 match the 'HIGH' region motif; the sequence is PNTHKELHVGH.

The protein belongs to the class-I aminoacyl-tRNA synthetase family. As to quaternary structure, monomer.

The protein resides in the cytoplasm. The catalysed reaction is tRNA(Arg) + L-arginine + ATP = L-arginyl-tRNA(Arg) + AMP + diphosphate. This is Arginine--tRNA ligase from Bdellovibrio bacteriovorus (strain ATCC 15356 / DSM 50701 / NCIMB 9529 / HD100).